We begin with the raw amino-acid sequence, 158 residues long: SsrA-binding protein (158 aa).

The disordered stretch occupies residues 133 to 158 (QLHDKRETEKKRDWNKEKGRLLRDKH).

Belongs to the SmpB family.

The protein resides in the cytoplasm. Required for rescue of stalled ribosomes mediated by trans-translation. Binds to transfer-messenger RNA (tmRNA), required for stable association of tmRNA with ribosomes. tmRNA and SmpB together mimic tRNA shape, replacing the anticodon stem-loop with SmpB. tmRNA is encoded by the ssrA gene; the 2 termini fold to resemble tRNA(Ala) and it encodes a 'tag peptide', a short internal open reading frame. During trans-translation Ala-aminoacylated tmRNA acts like a tRNA, entering the A-site of stalled ribosomes, displacing the stalled mRNA. The ribosome then switches to translate the ORF on the tmRNA; the nascent peptide is terminated with the 'tag peptide' encoded by the tmRNA and targeted for degradation. The ribosome is freed to recommence translation, which seems to be the essential function of trans-translation. In Beijerinckia indica subsp. indica (strain ATCC 9039 / DSM 1715 / NCIMB 8712), this protein is SsrA-binding protein.